Here is a 564-residue protein sequence, read N- to C-terminus: Phenylalanine--tRNA ligase beta subunit (564 aa).

Residues 286–362 (YFQNTLEVSV…IGRGLDSFKP (77 aa)) form the B5 domain. Mg(2+) contacts are provided by D340, D346, E349, and E350.

It belongs to the phenylalanyl-tRNA synthetase beta subunit family. Type 2 subfamily. Tetramer of two alpha and two beta subunits. Mg(2+) serves as cofactor.

It is found in the cytoplasm. It catalyses the reaction tRNA(Phe) + L-phenylalanine + ATP = L-phenylalanyl-tRNA(Phe) + AMP + diphosphate + H(+). The sequence is that of Phenylalanine--tRNA ligase beta subunit from Borrelia hermsii (strain HS1 / DAH).